Here is a 473-residue protein sequence, read N- to C-terminus: Phosphoglucosamine mutase (473 aa).

Residue Ser102 is the Phosphoserine intermediate of the active site. 4 residues coordinate Mg(2+): Ser102, Asp248, Asp250, and Asp252. The residue at position 102 (Ser102) is a Phosphoserine.

It belongs to the phosphohexose mutase family. It depends on Mg(2+) as a cofactor. Activated by phosphorylation.

The catalysed reaction is alpha-D-glucosamine 1-phosphate = D-glucosamine 6-phosphate. Its function is as follows. Catalyzes the conversion of glucosamine-6-phosphate to glucosamine-1-phosphate. The chain is Phosphoglucosamine mutase from Rhodospirillum centenum (strain ATCC 51521 / SW).